The sequence spans 442 residues: 3-isopropylmalate dehydratase large subunit (442 aa).

3 residues coordinate [4Fe-4S] cluster: Xaa347, Cys407, and Cys410.

Belongs to the aconitase/IPM isomerase family. LeuC type 1 subfamily. In terms of assembly, heterodimer of LeuC and LeuD. It depends on [4Fe-4S] cluster as a cofactor.

The catalysed reaction is (2R,3S)-3-isopropylmalate = (2S)-2-isopropylmalate. It functions in the pathway amino-acid biosynthesis; L-leucine biosynthesis; L-leucine from 3-methyl-2-oxobutanoate: step 2/4. Functionally, catalyzes the isomerization between 2-isopropylmalate and 3-isopropylmalate, via the formation of 2-isopropylmaleate. The polypeptide is 3-isopropylmalate dehydratase large subunit (Buchnera aphidicola subsp. Macrosiphoniella ludovicianae).